A 456-amino-acid polypeptide reads, in one-letter code: Zinc finger protein 25 (456 aa).

The region spanning 8–79 (VTLKDVIVEF…EVEFPHRGFP (72 aa)) is the KRAB domain. C2H2-type zinc fingers lie at residues 118–140 (CECKECGKFFCQKSALIVHQHTH), 146–168 (YDCDKCGKSFSKNEDLIRHQKIH), 174–196 (YECKECKKIFYHLSSLSRHLRTH), 202–224 (YECNQCEKSFYQKPHLTEHQKTH), 230–252 (FECTECGKFFYVKAYLMVHQKTH), 258–280 (YECKECGKAFSQKSHLTVHQRMH), 286–308 (YKCKECGKFFSRNSHLKTHQRSH), 314–336 (YECKECRKCFYQKSALTVHQRTH), 342–364 (FECNKCGKTFYYKSDLTKHQRKH), 370–392 (YECTECGKSFAVNSVLRLHQRTH), 398–420 (YACKECGKSFSQKSHFIIHQRKH), and 426–448 (YECQECGETFIQKSQLTAHQKTH).

It belongs to the krueppel C2H2-type zinc-finger protein family.

Its subcellular location is the nucleus. May be involved in transcriptional regulation. The polypeptide is Zinc finger protein 25 (ZNF25) (Homo sapiens (Human)).